Reading from the N-terminus, the 124-residue chain is Small ribosomal subunit protein uS12 (124 aa).

3-methylthioaspartic acid is present on D89.

Belongs to the universal ribosomal protein uS12 family. As to quaternary structure, part of the 30S ribosomal subunit. Contacts proteins S8 and S17. May interact with IF1 in the 30S initiation complex.

Functionally, with S4 and S5 plays an important role in translational accuracy. In terms of biological role, interacts with and stabilizes bases of the 16S rRNA that are involved in tRNA selection in the A site and with the mRNA backbone. Located at the interface of the 30S and 50S subunits, it traverses the body of the 30S subunit contacting proteins on the other side and probably holding the rRNA structure together. The combined cluster of proteins S8, S12 and S17 appears to hold together the shoulder and platform of the 30S subunit. The sequence is that of Small ribosomal subunit protein uS12 from Shewanella amazonensis (strain ATCC BAA-1098 / SB2B).